The following is a 339-amino-acid chain: Heme A synthase (339 aa).

8 helical membrane passes run 7-27, 92-112, 126-146, 159-179, 199-219, 254-274, 291-311, and 312-332; these read VIIWLLSGCFLVFIMVVVGGI, HRFIGRIIGLVFIIPFIYFLI, ILLGMGAFQGFLGWFMVKSGL, LHLTFAFITFAYTLWVALDLI, AIIILQIIYGGFVAGLNAGLI, VQFVHRTIAYFVAGLIVFLTF, ALLIIVFIQFTLGVLTLLYSV, and PLWLGVIHQAMAFILLATTTY. Heme is bound at residue His258. His319 contributes to the heme binding site.

It belongs to the COX15/CtaA family. Type 2 subfamily. As to quaternary structure, interacts with CtaB. It depends on heme b as a cofactor.

It localises to the cell membrane. It catalyses the reaction Fe(II)-heme o + 2 A + H2O = Fe(II)-heme a + 2 AH2. The protein operates within porphyrin-containing compound metabolism; heme A biosynthesis; heme A from heme O: step 1/1. Catalyzes the conversion of heme O to heme A by two successive hydroxylations of the methyl group at C8. The first hydroxylation forms heme I, the second hydroxylation results in an unstable dihydroxymethyl group, which spontaneously dehydrates, resulting in the formyl group of heme A. In Flavobacterium psychrophilum (strain ATCC 49511 / DSM 21280 / CIP 103535 / JIP02/86), this protein is Heme A synthase.